The chain runs to 517 residues: UDP-N-acetylmuramyl-tripeptide synthetase (517 aa).

Residue T48 coordinates UDP-N-acetyl-alpha-D-muramoyl-L-alanyl-D-glutamate. 125-131 provides a ligand contact to ATP; it reads GTKGKTT. UDP-N-acetyl-alpha-D-muramoyl-L-alanyl-D-glutamate-binding positions include 169 to 170, S196, and R204; that span reads TT. K238 carries the N6-carboxylysine modification.

The protein belongs to the MurCDEF family. MurE subfamily. In terms of processing, carboxylation is probably crucial for Mg(2+) binding and, consequently, for the gamma-phosphate positioning of ATP.

The protein localises to the cytoplasm. The protein operates within cell wall biogenesis; peptidoglycan biosynthesis. Functionally, catalyzes the addition of an amino acid to the nucleotide precursor UDP-N-acetylmuramoyl-L-alanyl-D-glutamate (UMAG) in the biosynthesis of bacterial cell-wall peptidoglycan. The protein is UDP-N-acetylmuramyl-tripeptide synthetase of Bifidobacterium longum (strain NCC 2705).